Consider the following 233-residue polypeptide: uncharacterized protein (233 aa).

The protein belongs to the asfivirus H233R family.

This is an uncharacterized protein from Ornithodoros (relapsing fever ticks).